Consider the following 191-residue polypeptide: Orotate phosphoribosyltransferase (191 aa).

114 to 122 (EDVVTTGKS) is a 5-phospho-alpha-D-ribose 1-diphosphate binding site. Orotate-binding residues include Thr118 and Arg146.

Belongs to the purine/pyrimidine phosphoribosyltransferase family. PyrE subfamily. As to quaternary structure, homodimer. Mg(2+) serves as cofactor.

The catalysed reaction is orotidine 5'-phosphate + diphosphate = orotate + 5-phospho-alpha-D-ribose 1-diphosphate. Its pathway is pyrimidine metabolism; UMP biosynthesis via de novo pathway; UMP from orotate: step 1/2. In terms of biological role, catalyzes the transfer of a ribosyl phosphate group from 5-phosphoribose 1-diphosphate to orotate, leading to the formation of orotidine monophosphate (OMP). This Clostridium botulinum (strain Loch Maree / Type A3) protein is Orotate phosphoribosyltransferase.